We begin with the raw amino-acid sequence, 249 residues long: tRNA pseudouridine synthase A (249 aa).

The Nucleophile role is filled by aspartate 53. Substrate is bound at residue tyrosine 111.

Belongs to the tRNA pseudouridine synthase TruA family. In terms of assembly, homodimer.

It catalyses the reaction uridine(38/39/40) in tRNA = pseudouridine(38/39/40) in tRNA. Formation of pseudouridine at positions 38, 39 and 40 in the anticodon stem and loop of transfer RNAs. The protein is tRNA pseudouridine synthase A of Streptococcus sanguinis (strain SK36).